The primary structure comprises 201 residues: Charged multivesicular body protein 6 (201 aa).

A lipid anchor (N-myristoyl glycine) is attached at glycine 2. The stretch at 10–145 (QSRVTEQDKA…YQRQIDELLA (136 aa)) forms a coiled coil. A Phosphoserine modification is found at serine 119. The residue at position 130 (threonine 130) is a Phosphothreonine. The Type-2 MIT-interacting motif motif lies at 168–179 (IELPEVPSEPLP). The interval 170-181 (LPEVPSEPLPEK) is interaction with VPS4A.

It belongs to the SNF7 family. Probable core component of the endosomal sorting required for transport complex III (ESCRT-III). ESCRT-III components are thought to multimerize to form a flat lattice on the perimeter membrane of the endosome. Several assembly forms of ESCRT-III may exist that interact and act sequentially. Interacts with VPS4A; the interaction is direct. Interacts with VPS4B; the interaction is direct. Interacts with CHMP4A, CHMP4B and CHMP4C. Interacts with SNF8, VPS25 and VPS36. Post-translationally, ISGylated in a CHMP5-dependent manner. Isgylation weakens its interaction with VPS4A. Ubiquitously expressed.

The protein localises to the endomembrane system. Its subcellular location is the endosome membrane. It is found in the late endosome membrane. It localises to the membrane. Its function is as follows. Probable core component of the endosomal sorting required for transport complex III (ESCRT-III) which is involved in multivesicular bodies (MVBs) formation and sorting of endosomal cargo proteins into MVBs. MVBs contain intraluminal vesicles (ILVs) that are generated by invagination and scission from the limiting membrane of the endosome and mostly are delivered to lysosomes enabling degradation of membrane proteins, such as stimulated growth factor receptors, lysosomal enzymes and lipids. The MVB pathway appears to require the sequential function of ESCRT-O, -I,-II and -III complexes. ESCRT-III proteins mostly dissociate from the invaginating membrane before the ILV is released. The ESCRT machinery also functions in topologically equivalent membrane fission events, such as the terminal stages of cytokinesis and the budding of enveloped viruses (HIV-1 and other lentiviruses). ESCRT-III proteins are believed to mediate the necessary vesicle extrusion and/or membrane fission activities, possibly in conjunction with the AAA ATPase VPS4. In the ESCRT-III complex, it probably serves as an acceptor for the ESCRT-II complex on endosomal membranes. The sequence is that of Charged multivesicular body protein 6 (CHMP6) from Homo sapiens (Human).